The chain runs to 100 residues: MSQERLLKVLKAPHISEKATNNAEKSNTIVFKVALDANKVEITNAVEQLFEVKVDSVRTVVVKGKTKRRGAKIGRRSDWKKAYVTLQEGQSLDFVEGAAE.

This sequence belongs to the universal ribosomal protein uL23 family. Part of the 50S ribosomal subunit. Contacts protein L29, and trigger factor when it is bound to the ribosome.

One of the early assembly proteins it binds 23S rRNA. One of the proteins that surrounds the polypeptide exit tunnel on the outside of the ribosome. Forms the main docking site for trigger factor binding to the ribosome. The protein is Large ribosomal subunit protein uL23 of Aggregatibacter actinomycetemcomitans (Actinobacillus actinomycetemcomitans).